A 356-amino-acid polypeptide reads, in one-letter code: Cysteine proteinase 3 (356 aa).

A signal peptide spans 1 to 16 (MSRLSLVLILVAGLFA). Positions 17-138 (TALAGPATFA…KGNLKLTNVV (122 aa)) are cleaved as a propeptide — activation peptide. An N-linked (GlcNAc...) asparagine glycan is attached at N123. Disulfide bonds link C160-C203 and C194-C236. Residue C163 is part of the active site. N-linked (GlcNAc...) asparagine glycosylation is present at N252. C294 and C344 are oxidised to a cystine. Active-site residues include H303 and N323.

This sequence belongs to the peptidase C1 family. Predominantly expressed in stem and root.

The protein resides in the vacuole. The protein is Cysteine proteinase 3 (CYP-3) of Solanum lycopersicum (Tomato).